Consider the following 345-residue polypeptide: Phosphoribosylformylglycinamidine cyclo-ligase (345 aa).

This sequence belongs to the AIR synthase family.

The protein localises to the cytoplasm. The enzyme catalyses 2-formamido-N(1)-(5-O-phospho-beta-D-ribosyl)acetamidine + ATP = 5-amino-1-(5-phospho-beta-D-ribosyl)imidazole + ADP + phosphate + H(+). It participates in purine metabolism; IMP biosynthesis via de novo pathway; 5-amino-1-(5-phospho-D-ribosyl)imidazole from N(2)-formyl-N(1)-(5-phospho-D-ribosyl)glycinamide: step 2/2. The protein is Phosphoribosylformylglycinamidine cyclo-ligase of Shewanella denitrificans (strain OS217 / ATCC BAA-1090 / DSM 15013).